Reading from the N-terminus, the 71-residue chain is Large ribosomal subunit protein uL29 (71 aa).

This sequence belongs to the universal ribosomal protein uL29 family.

This is Large ribosomal subunit protein uL29 from Roseiflexus sp. (strain RS-1).